The chain runs to 383 residues: Probable acyl-CoA dehydrogenase YdiO (383 aa).

The protein belongs to the acyl-CoA dehydrogenase family. FAD is required as a cofactor.

The enzyme catalyses a 2,3-saturated acyl-CoA + A = a 2,3-dehydroacyl-CoA + AH2. This is Probable acyl-CoA dehydrogenase YdiO (ydiO) from Escherichia coli O157:H7.